Here is a 987-residue protein sequence, read N- to C-terminus: Valine--tRNA ligase (987 aa).

The 'HIGH' region motif lies at 45 to 55; the sequence is PNVTGSLHMGH. The 'KMSKS' region signature appears at 634-638; the sequence is KMSKS. Residue Lys637 participates in ATP binding. Residues 917–985 adopt a coiled-coil conformation; sequence VIDIGAEKAR…LSAALARLSE (69 aa).

This sequence belongs to the class-I aminoacyl-tRNA synthetase family. ValS type 1 subfamily. As to quaternary structure, monomer.

The protein resides in the cytoplasm. The enzyme catalyses tRNA(Val) + L-valine + ATP = L-valyl-tRNA(Val) + AMP + diphosphate. Functionally, catalyzes the attachment of valine to tRNA(Val). As ValRS can inadvertently accommodate and process structurally similar amino acids such as threonine, to avoid such errors, it has a 'posttransfer' editing activity that hydrolyzes mischarged Thr-tRNA(Val) in a tRNA-dependent manner. The polypeptide is Valine--tRNA ligase (Cereibacter sphaeroides (strain ATCC 17029 / ATH 2.4.9) (Rhodobacter sphaeroides)).